Reading from the N-terminus, the 1031-residue chain is Protein translocase subunit SecA (1031 aa).

ATP contacts are provided by residues Gln143, 161–165 (GEGKT), and Asp662. Cys1015, Cys1017, Cys1026, and Cys1027 together coordinate Zn(2+).

The protein belongs to the SecA family. As to quaternary structure, monomer and homodimer. Part of the essential Sec protein translocation apparatus which comprises SecA, SecYEG and auxiliary proteins SecDF. Other proteins may also be involved. It depends on Zn(2+) as a cofactor.

The protein localises to the cell inner membrane. The protein resides in the cytoplasm. The catalysed reaction is ATP + H2O + cellular proteinSide 1 = ADP + phosphate + cellular proteinSide 2.. Part of the Sec protein translocase complex. Interacts with the SecYEG preprotein conducting channel. Has a central role in coupling the hydrolysis of ATP to the transfer of proteins into and across the cell membrane, serving as an ATP-driven molecular motor driving the stepwise translocation of polypeptide chains across the membrane. The sequence is that of Protein translocase subunit SecA from Chlorobaculum tepidum (strain ATCC 49652 / DSM 12025 / NBRC 103806 / TLS) (Chlorobium tepidum).